The following is a 909-amino-acid chain: MSINMKTFTQALARTAAVIEKTVHTTVQEVTGPKALQDYELLDQIGSAGPGLAWKLYAAKARDSTRPQQYPTVCVWMLDKRALSEARVRANLSKAAEDAFLDLIRADAGKLVRLRHPGVVHVVQALDENKNAMALVTEPLFASVANALGNVENVGNVPKDLKSMEMSLLEVKHGLLQISETLNFLHNNANLIHRAISPENVLITSAGSWKLAGFGFAISAAQAGNLDNMQSFHYSEYDVEDSILPVQPSLNYTAPELMRSKSPSAGASSDIFSFGCLAYHLVARKPLFDCNNNVKMYMNTLNYITNESFSSIPSELVSDLQRMLSTNESFRPTALDFTGSNFFRSDARLRALRFLDHLLERDNMQKSEFLKALSDMWKDFDSRVLRYKVLPPLCAELRNLVLQPIILPMVLTIAQSQDRTDFELITLPALVPVLSTASGDTLLLLVKHADLITNKTDSEHLVSHVLPLLLRAYNDNDVRIQEEVLKRSTSVAKQLDGQVVRQAILPRVHGLALKTTVAAVRVNALLCLAELVQTLDKPAAIEILETIQRCTAVDRSAPTLMCTLAVANAILKQYGVEFTAEHVLTLMMPLLTAQQLNVQQFAKYMLFVKDILRKIEEKRGVTVNDSGVPEVKPHSAANGLQFQSSTQIPEKVASAAKSSPAWDEDWGSPSKDSAVGNPASSRHNTNDQFNKSTDQSQPSIMSTLPNKTTAPTTCPAVDIEWPPRQSSSLTAPATDNQTQLNTGTSFASGFDELDPFANWPPRPNNGASVASTGLKNGAASNFSNNLPGGTHFQTANNDNWAFSSASLSSLKPPQQGNQGISANNQDPLNSFGVPKQSQGMPSFTSGSYNNQKPADISSIFGSSKTEPSAMKLAPPPSIAMGRGRGRGRGGTGTSTSKPSGSQPSLLDLL.

Residues Tyr39–Phe343 form the Protein kinase domain. HEAT repeat units lie at residues Ser311 to Arg348, Arg350 to Ser382, Arg383 to Val401, Leu402 to Gly439, Val465 to Gln502, Val499 to Lys537, and Phe578 to Glu617. Disordered regions lie at residues Asn624–Thr772 and Ser804–Leu909. 5 stretches are compositionally biased toward polar residues: residues Asn638–Ile648, Pro678–Thr712, Arg724–Ala747, Ser804–Leu828, and Lys835–Lys852.

This sequence belongs to the protein kinase superfamily. In terms of assembly, interacts with VTI11, VTI12 and CHC1. Expressed in roots, seedlings, leaves, stems, flowers, and, at low levels, in siliques.

Its subcellular location is the golgi apparatus membrane. The protein resides in the golgi apparatus. The protein localises to the trans-Golgi network membrane. It is found in the prevacuolar compartment membrane. Functionally, probably inactive kinase. Component of the AP2-containing clathrin coat that regulates clathrin-dependent trafficking at plasma membrane, TGN and endosomal system. Together with SCYL2B, required for cell growth, plant growth and development. Essential for polarized root hair development probably by mediating the root hair tip localization of cellulose synthase-like D3 (CSLD3). This Arabidopsis thaliana (Mouse-ear cress) protein is SCY1-like protein 2 B.